The following is a 107-amino-acid chain: Nucleoid-associated protein A1E_05550 (107 aa).

The protein belongs to the YbaB/EbfC family. Homodimer.

It is found in the cytoplasm. The protein resides in the nucleoid. Binds to DNA and alters its conformation. May be involved in regulation of gene expression, nucleoid organization and DNA protection. This is Nucleoid-associated protein A1E_05550 from Rickettsia canadensis (strain McKiel).